A 317-amino-acid chain; its full sequence is MSAGGEHLKDEGTRRQVVLSGGIAGLVSRFCVAPLDVVKIRLQLQIHSLSDPASHRDVVGPIYKGTLSTMRAIIKQEGITGLWKGNIPAELMYVCYGALQFTAYRTTTQVLAQLDPHRLPPALESFVSGAVAGGLATASTYPLDLLRTRFAAQGTERIYTSLLASVQDIARNEGPAGFFRGCSAAVGQIVPYMGLFFATYESLRPVLSGLENMPFGSGDAAAGVIASVLAKTGVFPLDLVRKRLQVQGPTRTLYVHRNIPEYRGVFSTIAMIVRTQGVRGLYRGLTVSLIKAAPASAITMWTYERSLKLLHDFRVAE.

Solcar repeat units lie at residues 12-110, 120-206, and 214-309; these read GTRR…TTQV, PPAL…LRPV, and PFGS…SLKL. A run of 6 helical transmembrane segments spans residues 17-35, 91-107, 126-146, 181-198, 220-240, and 284-301; these read VVLS…VAPL, LMYV…YRTT, FVSG…LDLL, GCSA…LFFA, AAAG…LDLV, and GLTV…ITMW.

This sequence belongs to the mitochondrial carrier (TC 2.A.29) family.

It is found in the mitochondrion inner membrane. Its function is as follows. Mitochondrial transporter that mediates uptake of thiamine pyrophosphate (ThPP) into mitochondria. This chain is Mitochondrial thiamine pyrophosphate carrier 1 (tpc1), found in Neosartorya fischeri (strain ATCC 1020 / DSM 3700 / CBS 544.65 / FGSC A1164 / JCM 1740 / NRRL 181 / WB 181) (Aspergillus fischerianus).